A 60-amino-acid chain; its full sequence is Large ribosomal subunit protein bL32 (60 aa).

Belongs to the bacterial ribosomal protein bL32 family.

The sequence is that of Large ribosomal subunit protein bL32 from Pseudothermotoga lettingae (strain ATCC BAA-301 / DSM 14385 / NBRC 107922 / TMO) (Thermotoga lettingae).